We begin with the raw amino-acid sequence, 138 residues long: Acidic phospholipase A2 ammodytin I1 (138 aa).

Residues 1–16 (MRILWIVAVCLIGAEG) form the signal peptide. Cystine bridges form between cysteine 42/cysteine 131, cysteine 44/cysteine 60, cysteine 59/cysteine 111, cysteine 65/cysteine 138, cysteine 66/cysteine 104, cysteine 73/cysteine 97, and cysteine 91/cysteine 102. Ca(2+) contacts are provided by tyrosine 43, glycine 45, and glycine 47. The active site involves histidine 63. Aspartate 64 lines the Ca(2+) pocket. Aspartate 105 is a catalytic residue.

The protein belongs to the phospholipase A2 family. Group II subfamily. D49 sub-subfamily. It depends on Ca(2+) as a cofactor. As to expression, expressed by the venom gland.

The protein resides in the secreted. The catalysed reaction is a 1,2-diacyl-sn-glycero-3-phosphocholine + H2O = a 1-acyl-sn-glycero-3-phosphocholine + a fatty acid + H(+). In terms of biological role, snake venom phospholipase A2 (PLA2) that has enzymatic activity but is non-toxic. PLA2 catalyzes the calcium-dependent hydrolysis of the 2-acyl groups in 3-sn-phosphoglycerides. The chain is Acidic phospholipase A2 ammodytin I1 from Vipera ammodytes ammodytes (Western sand viper).